A 309-amino-acid chain; its full sequence is Electron transfer flavoprotein subunit alpha (309 aa).

An FAD-binding site is contributed by 253 to 281 (LYIAVGISGAIQHLAGMKDSKVIVAINKD).

It belongs to the ETF alpha-subunit/FixB family. As to quaternary structure, heterodimer of an alpha and a beta subunit. FAD serves as cofactor.

The electron transfer flavoprotein serves as a specific electron acceptor for other dehydrogenases. It transfers the electrons to the main respiratory chain via ETF-ubiquinone oxidoreductase (ETF dehydrogenase). In Pseudomonas aeruginosa (strain ATCC 15692 / DSM 22644 / CIP 104116 / JCM 14847 / LMG 12228 / 1C / PRS 101 / PAO1), this protein is Electron transfer flavoprotein subunit alpha (etfA).